The sequence spans 220 residues: MSSLPALDQFFTLYHQAYSDKLGESPRYFPLGEASPCVLECDQEKVDASPERSVQWQAVKRDSQGPFDNIEHALSITLHPSIQAFYGRYFAAPLMFESEFGEGELLQPWNQQDFEYLQQNLIGHLMMKQKLKQPATWFIGVLGEGDEMLVVENETGSVWIEIPGEQPHRQLAASLEDFIASLRPRVCPPQKPVEAPMPETDHPGIWQRLKTMWRHLIAKR.

Belongs to the Syd family.

The protein resides in the cell inner membrane. Interacts with the SecY protein in vivo. May bind preferentially to an uncomplexed state of SecY, thus functioning either as a chelating agent for excess SecY in the cell or as a regulatory factor that negatively controls the translocase function. The sequence is that of Protein Syd from Shewanella loihica (strain ATCC BAA-1088 / PV-4).